Here is a 988-residue protein sequence, read N- to C-terminus: Transposase for transposon Tn21 (988 aa).

Residues 672–696 (GDGTTSSSDEQNFRTASKAKSTGHI) form a disordered region. The span at 674–695 (GTTSSSDEQNFRTASKAKSTGH) shows a compositional bias: polar residues.

It belongs to the transposase 7 family.

Functionally, required for transposition of transposon Tn21. In Escherichia coli, this protein is Transposase for transposon Tn21 (tnpA).